The primary structure comprises 330 residues: (4-{4-[2-(gamma-L-glutamylamino)ethyl]phenoxymethyl}furan-2-yl)methanamine synthase (330 aa).

The protein belongs to the MfnF family.

It catalyses the reaction gamma-L-glutamyltyramine + [5-(aminomethyl)furan-3-yl]methyl diphosphate = (4-{4-[2-(gamma-L-glutamylamino)ethyl]phenoxymethyl}furan-2-yl)methanamine + diphosphate. Its pathway is cofactor biosynthesis; methanofuran biosynthesis. In terms of biological role, catalyzes the condensation between 5-(aminomethyl)-3-furanmethanol diphosphate (F1-PP) and gamma-glutamyltyramine to produce APMF-Glu. In Methanocaldococcus jannaschii (strain ATCC 43067 / DSM 2661 / JAL-1 / JCM 10045 / NBRC 100440) (Methanococcus jannaschii), this protein is (4-{4-[2-(gamma-L-glutamylamino)ethyl]phenoxymethyl}furan-2-yl)methanamine synthase.